The sequence spans 270 residues: ATP synthase subunit a (270 aa).

5 consecutive transmembrane segments (helical) span residues 38 to 58 (VHIDSLFFSWFTGLIFLGIFY), 98 to 118 (IAPLALTIFCWVFLMNVMDLV), 143 to 163 (DVNITMAMALGVFALMIYYSI), 208 to 228 (LFGNMFAGEVVFILCAAMLPW), and 239 to 259 (AIFHILVITIQAFVFMMLTIV).

It belongs to the ATPase A chain family. In terms of assembly, F-type ATPases have 2 components, CF(1) - the catalytic core - and CF(0) - the membrane proton channel. CF(1) has five subunits: alpha(3), beta(3), gamma(1), delta(1), epsilon(1). CF(0) has three main subunits: a(1), b(2) and c(9-12). The alpha and beta chains form an alternating ring which encloses part of the gamma chain. CF(1) is attached to CF(0) by a central stalk formed by the gamma and epsilon chains, while a peripheral stalk is formed by the delta and b chains.

It localises to the cell inner membrane. Its function is as follows. Key component of the proton channel; it plays a direct role in the translocation of protons across the membrane. In Vibrio alginolyticus, this protein is ATP synthase subunit a.